A 200-amino-acid chain; its full sequence is 3-isopropylmalate dehydratase small subunit (200 aa).

Belongs to the LeuD family. LeuD type 1 subfamily. In terms of assembly, heterodimer of LeuC and LeuD.

It carries out the reaction (2R,3S)-3-isopropylmalate = (2S)-2-isopropylmalate. It participates in amino-acid biosynthesis; L-leucine biosynthesis; L-leucine from 3-methyl-2-oxobutanoate: step 2/4. In terms of biological role, catalyzes the isomerization between 2-isopropylmalate and 3-isopropylmalate, via the formation of 2-isopropylmaleate. The sequence is that of 3-isopropylmalate dehydratase small subunit from Saccharopolyspora erythraea (strain ATCC 11635 / DSM 40517 / JCM 4748 / NBRC 13426 / NCIMB 8594 / NRRL 2338).